We begin with the raw amino-acid sequence, 621 residues long: tRNA uridine 5-carboxymethylaminomethyl modification enzyme MnmG (621 aa).

Position 9-14 (9-14 (GGGHAG)) interacts with FAD. Residue 268–282 (GPRYCPSIEDKINRF) participates in NAD(+) binding.

The protein belongs to the MnmG family. Homodimer. Heterotetramer of two MnmE and two MnmG subunits. It depends on FAD as a cofactor.

The protein resides in the cytoplasm. In terms of biological role, NAD-binding protein involved in the addition of a carboxymethylaminomethyl (cmnm) group at the wobble position (U34) of certain tRNAs, forming tRNA-cmnm(5)s(2)U34. The sequence is that of tRNA uridine 5-carboxymethylaminomethyl modification enzyme MnmG from Campylobacter fetus subsp. fetus (strain 82-40).